The chain runs to 258 residues: D-aminoacyl-tRNA deacylase (258 aa).

It belongs to the DtdA deacylase family. In terms of assembly, monomer. Zn(2+) is required as a cofactor.

The catalysed reaction is a D-aminoacyl-tRNA + H2O = a tRNA + a D-alpha-amino acid + H(+). It catalyses the reaction glycyl-tRNA(Ala) + H2O = tRNA(Ala) + glycine + H(+). In terms of biological role, D-aminoacyl-tRNA deacylase with broad substrate specificity. By recycling D-aminoacyl-tRNA to D-amino acids and free tRNA molecules, this enzyme counteracts the toxicity associated with the formation of D-aminoacyl-tRNA entities in vivo. The polypeptide is D-aminoacyl-tRNA deacylase (Cenarchaeum symbiosum (strain A)).